The primary structure comprises 84 residues: Putative membrane protein insertion efficiency factor (84 aa).

Belongs to the UPF0161 family.

The protein resides in the cell inner membrane. Could be involved in insertion of integral membrane proteins into the membrane. This chain is Putative membrane protein insertion efficiency factor, found in Shewanella frigidimarina (strain NCIMB 400).